Consider the following 493-residue polypeptide: Glutamyl-tRNA(Gln) amidotransferase subunit A (493 aa).

Catalysis depends on charge relay system residues Lys-81 and Ser-156. The active-site Acyl-ester intermediate is the Ser-180.

It belongs to the amidase family. GatA subfamily. As to quaternary structure, heterotrimer of A, B and C subunits.

The catalysed reaction is L-glutamyl-tRNA(Gln) + L-glutamine + ATP + H2O = L-glutaminyl-tRNA(Gln) + L-glutamate + ADP + phosphate + H(+). Its function is as follows. Allows the formation of correctly charged Gln-tRNA(Gln) through the transamidation of misacylated Glu-tRNA(Gln) in organisms which lack glutaminyl-tRNA synthetase. The reaction takes place in the presence of glutamine and ATP through an activated gamma-phospho-Glu-tRNA(Gln). This is Glutamyl-tRNA(Gln) amidotransferase subunit A from Mycobacterium ulcerans (strain Agy99).